The chain runs to 121 residues: MSRGKRPKWMIEIAIERMNILFERAEMEFERHPERSNRYVVLAKKLSTKYNTKIPDKWARRYCKRCNKFLYPGHNATVRLVNEEVNILCGECGHVMKIPYHKEKKNKRRARYESIKKRNDE.

4 residues coordinate Zn(2+): cysteine 63, cysteine 66, cysteine 89, and cysteine 92.

Belongs to the eukaryotic/archaeal RNase P protein component 4 family. Consists of a catalytic RNA component and at least 4-5 protein subunits. The cofactor is Zn(2+).

Its subcellular location is the cytoplasm. The catalysed reaction is Endonucleolytic cleavage of RNA, removing 5'-extranucleotides from tRNA precursor.. In terms of biological role, part of ribonuclease P, a protein complex that generates mature tRNA molecules by cleaving their 5'-ends. This Methanobrevibacter smithii (strain ATCC 35061 / DSM 861 / OCM 144 / PS) protein is Ribonuclease P protein component 4.